The chain runs to 291 residues: 33 kDa chaperonin (291 aa).

Disulfide bonds link cysteine 237-cysteine 239 and cysteine 270-cysteine 273.

It belongs to the HSP33 family. Under oxidizing conditions two disulfide bonds are formed involving the reactive cysteines. Under reducing conditions zinc is bound to the reactive cysteines and the protein is inactive.

It is found in the cytoplasm. In terms of biological role, redox regulated molecular chaperone. Protects both thermally unfolding and oxidatively damaged proteins from irreversible aggregation. Plays an important role in the bacterial defense system toward oxidative stress. In Bacillus cereus (strain G9842), this protein is 33 kDa chaperonin.